A 249-amino-acid chain; its full sequence is Quinate/shikimate dehydrogenase (249 aa).

Positions 32 and 68 each coordinate substrate. Residues Ala-93 to Ala-96, Asn-116 to Asp-119, Lys-166, Cys-193 to Asn-196, and Gly-216 each bind NAD(+).

This sequence belongs to the shikimate dehydrogenase family. Homodimer.

The enzyme catalyses L-quinate + NAD(+) = 3-dehydroquinate + NADH + H(+). The catalysed reaction is L-quinate + NADP(+) = 3-dehydroquinate + NADPH + H(+). It carries out the reaction shikimate + NADP(+) = 3-dehydroshikimate + NADPH + H(+). It catalyses the reaction shikimate + NAD(+) = 3-dehydroshikimate + NADH + H(+). Its pathway is metabolic intermediate biosynthesis; chorismate biosynthesis; chorismate from D-erythrose 4-phosphate and phosphoenolpyruvate: step 4/7. The actual biological function of YdiB remains unclear, nor is it known whether 3-dehydroshikimate or quinate represents the natural substrate. Catalyzes the reversible NAD-dependent reduction of both 3-dehydroshikimate (DHSA) and 3-dehydroquinate to yield shikimate (SA) and quinate, respectively. It can use both NAD or NADP for catalysis, however it has higher catalytic efficiency with NAD. The polypeptide is Quinate/shikimate dehydrogenase (Shigella flexneri serotype 5b (strain 8401)).